Reading from the N-terminus, the 387-residue chain is Ferrochelatase (387 aa).

2 residues coordinate Fe cation: His196 and Glu277.

It belongs to the ferrochelatase family.

It is found in the cytoplasm. It catalyses the reaction heme b + 2 H(+) = protoporphyrin IX + Fe(2+). Its pathway is porphyrin-containing compound metabolism; protoheme biosynthesis; protoheme from protoporphyrin-IX: step 1/1. Functionally, catalyzes the ferrous insertion into protoporphyrin IX. The sequence is that of Ferrochelatase from Gloeothece citriformis (strain PCC 7424) (Cyanothece sp. (strain PCC 7424)).